The primary structure comprises 669 residues: Trifunctional UDP-glucose 4,6-dehydratase/UDP-4-keto-6-deoxy-D-glucose 3,5-epimerase/UDP-4-keto-L-rhamnose-reductase RHM1 (669 aa).

13-19 serves as a coordination point for NAD(+); it reads GAAGFIA. Thr-132 is a substrate binding site. Asp-133 (proton donor) is an active-site residue. Catalysis depends on proton acceptor residues Glu-134 and Tyr-159. Residue 391 to 397 participates in NADP(+) binding; it reads GKTGWIG.

The protein in the N-terminal section; belongs to the NAD(P)-dependent epimerase/dehydratase family. dTDP-glucose dehydratase subfamily. In the C-terminal section; belongs to the dTDP-4-dehydrorhamnose reductase family. NAD(+) serves as cofactor. It depends on NADP(+) as a cofactor. Expressed in roots, stems, leaves, seedlings, inflorescence tips, and siliques. Detected in the adaxial side of cotyledons, in the emerging leaves and in trichomes. Also detected in the root tip, more precisely in the epidermal cells in the meristematic and elongation zone.

It is found in the cytoplasm. The protein resides in the cytosol. It catalyses the reaction UDP-alpha-D-glucose = UDP-4-dehydro-6-deoxy-alpha-D-glucose + H2O. It participates in carbohydrate biosynthesis. Trifunctional enzyme involved in UDP-beta-L-rhamnose biosynthesis, a precursor of the primary cell wall components rhamnogalacturonan I (RG-I) and rhamnogalacturonan II (RG-II). Plays a major role in supplying UDP-rhamnose for flavonol biosynthesis. Catalyzes the dehydration of UDP-glucose to form UDP-4-dehydro-6-deoxy-D-glucose followed by the epimerization of the C3' and C5' positions of UDP-4-dehydro-6-deoxy-D-glucose to form UDP-4-keto-beta-L-rhamnose and the reduction of UDP-4-keto-beta-L-rhamnose to yield UDP-beta-L-rhamnose. This is Trifunctional UDP-glucose 4,6-dehydratase/UDP-4-keto-6-deoxy-D-glucose 3,5-epimerase/UDP-4-keto-L-rhamnose-reductase RHM1 from Arabidopsis thaliana (Mouse-ear cress).